Reading from the N-terminus, the 305-residue chain is Homoserine O-acetyltransferase (305 aa).

The active-site Acyl-thioester intermediate is Cys142. 2 residues coordinate substrate: Lys163 and Ser192. The Proton acceptor role is filled by His235. Glu237 is a catalytic residue. Arg249 is a substrate binding site.

It belongs to the MetA family.

Its subcellular location is the cytoplasm. It catalyses the reaction L-homoserine + acetyl-CoA = O-acetyl-L-homoserine + CoA. It participates in amino-acid biosynthesis; L-methionine biosynthesis via de novo pathway; O-acetyl-L-homoserine from L-homoserine: step 1/1. Transfers an acetyl group from acetyl-CoA to L-homoserine, forming acetyl-L-homoserine. This chain is Homoserine O-acetyltransferase, found in Hyphomonas neptunium (strain ATCC 15444).